Reading from the N-terminus, the 96-residue chain is Small ribosomal subunit protein bS18 (96 aa).

Over residues 1-18 the composition is skewed to basic residues; it reads MPPPRGKGRFGKDKRPKR. Residues 1-21 form a disordered region; that stretch reads MPPPRGKGRFGKDKRPKRNTQ.

This sequence belongs to the bacterial ribosomal protein bS18 family. As to quaternary structure, part of the 30S ribosomal subunit. Forms a tight heterodimer with protein bS6.

Functionally, binds as a heterodimer with protein bS6 to the central domain of the 16S rRNA, where it helps stabilize the platform of the 30S subunit. The protein is Small ribosomal subunit protein bS18 of Methylibium petroleiphilum (strain ATCC BAA-1232 / LMG 22953 / PM1).